A 232-amino-acid chain; its full sequence is Large ribosomal subunit protein uL1 (232 aa).

It belongs to the universal ribosomal protein uL1 family. As to quaternary structure, part of the 50S ribosomal subunit.

Its function is as follows. Binds directly to 23S rRNA. The L1 stalk is quite mobile in the ribosome, and is involved in E site tRNA release. Functionally, protein L1 is also a translational repressor protein, it controls the translation of the L11 operon by binding to its mRNA. This is Large ribosomal subunit protein uL1 from Cutibacterium acnes (strain DSM 16379 / KPA171202) (Propionibacterium acnes).